A 125-amino-acid chain; its full sequence is Small ribosomal subunit protein eS6 (125 aa).

It belongs to the eukaryotic ribosomal protein eS6 family.

This is Small ribosomal subunit protein eS6 from Pyrococcus abyssi (strain GE5 / Orsay).